A 275-amino-acid chain; its full sequence is Large ribosomal subunit protein uL2 (275 aa).

The segment at 225–275 (MNPVDHPHGGGEGRSPIGRPPVTPWGKPALGTRTRNKKKASSKLIVKRRTK) is disordered. The segment covering 258-275 (TRNKKKASSKLIVKRRTK) has biased composition (basic residues).

It belongs to the universal ribosomal protein uL2 family. As to quaternary structure, part of the 50S ribosomal subunit. Forms a bridge to the 30S subunit in the 70S ribosome.

Functionally, one of the primary rRNA binding proteins. Required for association of the 30S and 50S subunits to form the 70S ribosome, for tRNA binding and peptide bond formation. It has been suggested to have peptidyltransferase activity; this is somewhat controversial. Makes several contacts with the 16S rRNA in the 70S ribosome. This Desulforudis audaxviator (strain MP104C) protein is Large ribosomal subunit protein uL2.